The primary structure comprises 427 residues: Ribosome biogenesis protein WDR12 homolog (427 aa).

Residues 13-97 form a ubiquitin-like (UBL) domain region; that stretch reads LQLHLYTKQK…EDTVELEYVE (85 aa). WD repeat units lie at residues 109 to 146, 148 to 190, 197 to 236, 260 to 298, 301 to 339, 345 to 385, and 389 to 427; these read LHDDWVSAVEAKDNWILTGCYDNTLNIWTTKGKHKLTI, GHIA…NSVE, GHERGVDCIAANRSKTRMATGSWDTMLKIWSTDVRNDGDS, GHRECISGVQWIDDNTLVTSSWDHTIKIWDLALSGIKSE, GHKSFFDLSYSHLNGLIIAASPDKNLRLYDPKSNQGTIV, GHTQ…APIF, and GHEDKVLACDWSNPKFILSGGSDNSVRVFKSKIAIGEQK.

The protein belongs to the WD repeat WDR12/YTM1 family.

It localises to the nucleus. The protein resides in the nucleolus. It is found in the nucleoplasm. Its function is as follows. Required for maturation of ribosomal RNAs and formation of the large ribosomal subunit. In Aedes aegypti (Yellowfever mosquito), this protein is Ribosome biogenesis protein WDR12 homolog.